The primary structure comprises 235 residues: Probable flavin-dependent thymidylate synthase (235 aa).

In terms of domain architecture, ThyX spans 1 to 229 (MKVQLIASTI…PNTYQDIPTE (229 aa)). FAD-binding positions include Ser70 and 93–95 (RHR). DUMP contacts are provided by residues 90-93 (ELER), 103-105 (SQR), and Arg168. A ThyX motif motif is present at residues 93–103 (RHRHLSFSVVS). 184 to 186 (NHR) contacts FAD. Arg195 is a binding site for dUMP. Catalysis depends on Arg195, which acts as the Involved in ionization of N3 of dUMP, leading to its activation.

It belongs to the thymidylate synthase ThyX family. Homotetramer. Requires FAD as cofactor.

The catalysed reaction is dUMP + (6R)-5,10-methylene-5,6,7,8-tetrahydrofolate + NADPH + H(+) = dTMP + (6S)-5,6,7,8-tetrahydrofolate + NADP(+). It functions in the pathway pyrimidine metabolism; dTTP biosynthesis. In terms of biological role, catalyzes the reductive methylation of 2'-deoxyuridine-5'-monophosphate (dUMP) to 2'-deoxythymidine-5'-monophosphate (dTMP) while utilizing 5,10-methylenetetrahydrofolate (mTHF) as the methyl donor, and NADPH and FADH(2) as the reductant. This Mycobacterium (Mycobacteriophage D29) protein is Probable flavin-dependent thymidylate synthase (48).